A 199-amino-acid chain; its full sequence is Probable nicotinate-nucleotide adenylyltransferase (199 aa).

This sequence belongs to the NadD family.

It catalyses the reaction nicotinate beta-D-ribonucleotide + ATP + H(+) = deamido-NAD(+) + diphosphate. Its pathway is cofactor biosynthesis; NAD(+) biosynthesis; deamido-NAD(+) from nicotinate D-ribonucleotide: step 1/1. Its function is as follows. Catalyzes the reversible adenylation of nicotinate mononucleotide (NaMN) to nicotinic acid adenine dinucleotide (NaAD). This Leptospira interrogans serogroup Icterohaemorrhagiae serovar copenhageni (strain Fiocruz L1-130) protein is Probable nicotinate-nucleotide adenylyltransferase.